The primary structure comprises 252 residues: MSQILLQPANAMITLENVNKWYGQFHVLKNINLTVQPGERIVLCGPSGSGKSTTIRCINHLEEHQQGRIVVDGIELNEDIRNIERVRQEVGMVFQHFNLFPHLTVLQNCTLAPIWVRKMPKKEAEDLAVHYLERVRIAEHAHKFPGQISGGQQQRVAIARSLCMKPKIMLFDEPTSALDPEMVKEVLDTMIGLAQSGMTMLCVTHEMGFARTVADRVIFMDRGEIVEQAAPDEFFAHPKSERTRAFLSQVIH.

Positions 13 to 247 (ITLENVNKWY…PKSERTRAFL (235 aa)) constitute an ABC transporter domain. 45 to 52 (GPSGSGKS) serves as a coordination point for ATP.

The protein belongs to the ABC transporter superfamily.

The protein localises to the cell inner membrane. In terms of biological role, probably part of a binding-protein-dependent transport system YdhWXYZ for an amino acid. Probably responsible for energy coupling to the transport system. This is an uncharacterized protein from Escherichia coli (strain K12).